The following is a 234-amino-acid chain: MKFSFVSLFPNLMEFYFQDSILARAKEKKLFKLNFYNPRDFSKNSYHKVDDYKIGGGAGLLMQAEPMYEVLRSIQEKKENPYFIFLNPSGKTFNQKDAKRLSKKEHIVFVCGRYEGIDERVLEIFANEIFSIGDFILTGGELPALVMCDAILRNVNGVLGNMESLKEESFENNLLEAPAFSKPFIFEKKNKKFYTPSEFLKGNHARIASLKTTLASCKTKFFRPDLFLEHERKK.

Residues Gly-112 and 132-137 contribute to the S-adenosyl-L-methionine site; that span reads IGDFIL.

It belongs to the RNA methyltransferase TrmD family. As to quaternary structure, homodimer.

The protein localises to the cytoplasm. The catalysed reaction is guanosine(37) in tRNA + S-adenosyl-L-methionine = N(1)-methylguanosine(37) in tRNA + S-adenosyl-L-homocysteine + H(+). Its function is as follows. Specifically methylates guanosine-37 in various tRNAs. The protein is tRNA (guanine-N(1)-)-methyltransferase of Campylobacter jejuni (strain RM1221).